The primary structure comprises 464 residues: Sugar transporter ERD6-like 1 (464 aa).

Transmembrane regions (helical) follow at residues 23 to 43, 72 to 92, 95 to 115, 125 to 145, 156 to 176, 180 to 200, 263 to 283, 298 to 318, 326 to 346, 359 to 379, 399 to 419, and 424 to 444; these read ITCG…VYGC, VMTL…AVIG, QTMW…AFAH, GFLG…IAEI, FSNQ…GNFF, TLAL…FFIP, LIIG…AISA, IGTS…MFAV, LLMS…LSYY, PILI…LGGL, LVTV…NFMM, and FGTY…VWTL.

It belongs to the major facilitator superfamily. Sugar transporter (TC 2.A.1.1) family.

The protein localises to the membrane. Functionally, sugar transporter. In Arabidopsis thaliana (Mouse-ear cress), this protein is Sugar transporter ERD6-like 1 (SUGTL4).